The primary structure comprises 441 residues: Argininosuccinate lyase (441 aa).

The protein belongs to the lyase 1 family. Argininosuccinate lyase subfamily.

It localises to the cytoplasm. It catalyses the reaction 2-(N(omega)-L-arginino)succinate = fumarate + L-arginine. It functions in the pathway amino-acid biosynthesis; L-arginine biosynthesis; L-arginine from L-ornithine and carbamoyl phosphate: step 3/3. The protein is Argininosuccinate lyase of Thermoanaerobacter pseudethanolicus (strain ATCC 33223 / 39E) (Clostridium thermohydrosulfuricum).